A 351-amino-acid chain; its full sequence is UDP-N-acetylglucosamine--N-acetylmuramyl-(pentapeptide) pyrophosphoryl-undecaprenol N-acetylglucosamine transferase (351 aa).

UDP-N-acetyl-alpha-D-glucosamine-binding positions include 13–15 (TGG), Asn125, Arg161, Ser189, Ile241, 260–265 (ALTVCE), and Gln285.

The protein belongs to the glycosyltransferase 28 family. MurG subfamily.

The protein resides in the cell inner membrane. It carries out the reaction di-trans,octa-cis-undecaprenyl diphospho-N-acetyl-alpha-D-muramoyl-L-alanyl-D-glutamyl-meso-2,6-diaminopimeloyl-D-alanyl-D-alanine + UDP-N-acetyl-alpha-D-glucosamine = di-trans,octa-cis-undecaprenyl diphospho-[N-acetyl-alpha-D-glucosaminyl-(1-&gt;4)]-N-acetyl-alpha-D-muramoyl-L-alanyl-D-glutamyl-meso-2,6-diaminopimeloyl-D-alanyl-D-alanine + UDP + H(+). It participates in cell wall biogenesis; peptidoglycan biosynthesis. Its function is as follows. Cell wall formation. Catalyzes the transfer of a GlcNAc subunit on undecaprenyl-pyrophosphoryl-MurNAc-pentapeptide (lipid intermediate I) to form undecaprenyl-pyrophosphoryl-MurNAc-(pentapeptide)GlcNAc (lipid intermediate II). The sequence is that of UDP-N-acetylglucosamine--N-acetylmuramyl-(pentapeptide) pyrophosphoryl-undecaprenol N-acetylglucosamine transferase from Haemophilus influenzae (strain 86-028NP).